Here is a 386-residue protein sequence, read N- to C-terminus: MKIHEYQGKELLKQFGVPVPRGIPAFSVDEAVAAAEKLGGPVWVVKAQIHAGGRGKGGGVKLARSLDDVRKLASEILGMQLVTHQTGPEGQKVNRLYIEDGADIQKEYYVSLVTDRATQKVAIIASSEGGMDIEEVAHSTPEKIITEYIDPLTGLQAEQAKKVAESIGLSGGSADQAADVFQKLYTCYMDTDASLVEINPLNCDSKGNIIALDAKFNFDSNALFRHPEIVAYRDLDEEDPAEIEASKFDLAYIQLDGNIGCLVNGAGLAMATMDTIKLFGGEPANFLDVGGGATAEKVTEAFKIMLKNKGVKAILVNIFGGIMRCDVIAEGVITACKAVNLNVPLVVRMKGTNEELGKKMLADSGLPIISADTMAEAATRVVAAVK.

The ATP-grasp domain occupies 9-244; it reads KELLKQFGVP…LDEEDPAEIE (236 aa). ATP contacts are provided by residues Lys-46, 53-55, Glu-99, Ala-102, and Glu-107; that span reads GRG. The Mg(2+) site is built by Asn-199 and Asp-213. Residues Asn-264 and 321–323 contribute to the substrate site; that span reads GIM.

It belongs to the succinate/malate CoA ligase beta subunit family. In terms of assembly, heterotetramer of two alpha and two beta subunits. Mg(2+) serves as cofactor.

The catalysed reaction is succinate + ATP + CoA = succinyl-CoA + ADP + phosphate. It catalyses the reaction GTP + succinate + CoA = succinyl-CoA + GDP + phosphate. Its pathway is carbohydrate metabolism; tricarboxylic acid cycle; succinate from succinyl-CoA (ligase route): step 1/1. Functionally, succinyl-CoA synthetase functions in the citric acid cycle (TCA), coupling the hydrolysis of succinyl-CoA to the synthesis of either ATP or GTP and thus represents the only step of substrate-level phosphorylation in the TCA. The beta subunit provides nucleotide specificity of the enzyme and binds the substrate succinate, while the binding sites for coenzyme A and phosphate are found in the alpha subunit. The polypeptide is Succinate--CoA ligase [ADP-forming] subunit beta (Bordetella petrii (strain ATCC BAA-461 / DSM 12804 / CCUG 43448)).